Here is a 129-residue protein sequence, read N- to C-terminus: MADNIPGDLKYTREHEWARVQGTSVVVGVTQHAQESLGDVVYVELPKVGSTVTEGKQFGVIESTKAVSELYSPLTGKVVKVNDGLSDNPSTVNTDPYGAGWIVEIEPSDPKQVDGLMDAAAYTALLQNS.

In terms of domain architecture, Lipoyl-binding spans 24 to 106 (SVVVGVTQHA…YGAGWIVEIE (83 aa)). Lysine 65 bears the N6-lipoyllysine mark.

Belongs to the GcvH family. As to quaternary structure, the glycine cleavage system is composed of four proteins: P, T, L and H. Requires (R)-lipoate as cofactor.

The glycine cleavage system catalyzes the degradation of glycine. The H protein shuttles the methylamine group of glycine from the P protein to the T protein. This is Glycine cleavage system H protein from Myxococcus xanthus (strain DK1622).